A 439-amino-acid polypeptide reads, in one-letter code: Vacuolar zinc transporter COT1 (439 aa).

The Cytoplasmic portion of the chain corresponds to 1 to 9 (MKLGSKQVK). The chain crosses the membrane as a helical span at residues 10–30 (IISLLLLDTVFFGIEITTGYL). Over 31 to 33 (SHS) the chain is Vacuolar. The helical transmembrane segment at 34-54 (LALIADSFHMLNDIISLVVAL) threads the bilayer. Over 55–76 (WAVNVAKNRNPDSTYTYGWKRA) the chain is Cytoplasmic. A helical membrane pass occupies residues 77-97 (EILGALINAVFLIALCVSILI). Residues 98-113 (EALQRIIAPPVIENPK) lie on the Vacuolar side of the membrane. A helical membrane pass occupies residues 114–134 (FVLYVGVAGLISNTVGLFLFH). Over 135 to 244 (DNDQEHGHGH…RKRSLNMHGV (110 aa)) the chain is Cytoplasmic. Short sequence motifs (histidine repeat) lie at residues 140-144 (HGHGH), 165-169 (HTHAH), and 219-223 (SSHTI). The span at 207 to 230 (PENASKTPSYSTSSHTIASGGNYT) shows a compositional bias: polar residues. The tract at residues 207 to 231 (PENASKTPSYSTSSHTIASGGNYTE) is disordered. Phosphoserine is present on serine 225. Residues 245–265 (FLHVLGDALGNIGVMLSAFFI) traverse the membrane as a helical segment. The Vacuolar segment spans residues 266 to 274 (WKTDYSWKY). A helical transmembrane segment spans residues 275–295 (YTDPLVSLIITGIIFSSALPL). At 296 to 439 (SCKASKILLQ…CNTADCLEDH (144 aa)) the chain is on the cytoplasmic side. Lysine 301 is covalently cross-linked (Glycyl lysine isopeptide (Lys-Gly) (interchain with G-Cter in ubiquitin)). Residues 388-402 (TSTERAGDSQGDHLQ) are compositionally biased toward basic and acidic residues. Residues 388-408 (TSTERAGDSQGDHLQNDPLSL) are disordered.

The protein belongs to the cation diffusion facilitator (CDF) transporter (TC 2.A.4) family. SLC30A subfamily.

It localises to the vacuole membrane. It catalyses the reaction Zn(2+)(in) = Zn(2+)(out). Functionally, vacuolar transporter that regulates zinc homeostasis by mediating zinc transport and storage into the vacuole. Plays a role in resistance to zinc shock resulting from sudden influx of zinc into cytoplasm. May also participate in the regulation of cobalt levels under normal physiological conditions and may be important in the supply of metal that is required for metalloenzyme or cofactor synthesis. Involved in the resistance to cobalt and rhodium ions. The chain is Vacuolar zinc transporter COT1 from Saccharomyces cerevisiae (strain ATCC 204508 / S288c) (Baker's yeast).